The primary structure comprises 360 residues: Phospho-N-acetylmuramoyl-pentapeptide-transferase (360 aa).

The next 10 membrane-spanning stretches (helical) occupy residues 18 to 38 (VFSY…FLSL), 72 to 92 (PTMG…MWAY), 94 to 114 (SNPY…VGFV), 132 to 152 (WKYF…YAVG), 168 to 188 (IMPQ…VGTS), 199 to 219 (GLAI…AWAT), 236 to 256 (AGEL…FLWF), 263 to 283 (VFMG…IAVL), 288 to 308 (FLLL…ILQV), and 338 to 358 (VIVR…ATLK).

The protein belongs to the glycosyltransferase 4 family. MraY subfamily. Mg(2+) is required as a cofactor.

It localises to the cell inner membrane. The enzyme catalyses UDP-N-acetyl-alpha-D-muramoyl-L-alanyl-gamma-D-glutamyl-meso-2,6-diaminopimeloyl-D-alanyl-D-alanine + di-trans,octa-cis-undecaprenyl phosphate = di-trans,octa-cis-undecaprenyl diphospho-N-acetyl-alpha-D-muramoyl-L-alanyl-D-glutamyl-meso-2,6-diaminopimeloyl-D-alanyl-D-alanine + UMP. The protein operates within cell wall biogenesis; peptidoglycan biosynthesis. Its function is as follows. Catalyzes the initial step of the lipid cycle reactions in the biosynthesis of the cell wall peptidoglycan: transfers peptidoglycan precursor phospho-MurNAc-pentapeptide from UDP-MurNAc-pentapeptide onto the lipid carrier undecaprenyl phosphate, yielding undecaprenyl-pyrophosphoryl-MurNAc-pentapeptide, known as lipid I. The protein is Phospho-N-acetylmuramoyl-pentapeptide-transferase of Serratia proteamaculans (strain 568).